Consider the following 360-residue polypeptide: 3-isopropylmalate dehydrogenase (360 aa).

76-89 (GPKWDTIERDIRPE) provides a ligand contact to NAD(+). Substrate-binding residues include arginine 96, arginine 106, arginine 134, and aspartate 224. 3 residues coordinate Mg(2+): aspartate 224, aspartate 248, and aspartate 252. Residue 282–294 (GSAPDIAGQGIAN) participates in NAD(+) binding.

It belongs to the isocitrate and isopropylmalate dehydrogenases family. LeuB type 1 subfamily. In terms of assembly, homodimer. The cofactor is Mg(2+). Requires Mn(2+) as cofactor.

It localises to the cytoplasm. The enzyme catalyses (2R,3S)-3-isopropylmalate + NAD(+) = 4-methyl-2-oxopentanoate + CO2 + NADH. The protein operates within amino-acid biosynthesis; L-leucine biosynthesis; L-leucine from 3-methyl-2-oxobutanoate: step 3/4. Functionally, catalyzes the oxidation of 3-carboxy-2-hydroxy-4-methylpentanoate (3-isopropylmalate) to 3-carboxy-4-methyl-2-oxopentanoate. The product decarboxylates to 4-methyl-2 oxopentanoate. This chain is 3-isopropylmalate dehydrogenase, found in Pseudomonas syringae pv. tomato (strain ATCC BAA-871 / DC3000).